Here is a 361-residue protein sequence, read N- to C-terminus: Terpene synthase 6 (361 aa).

Positions 81 to 86 match the DDxx(x)D/E motif motif; sequence DDVLDA. Positions 223 to 231 match the NDxxSxxxD/E motif motif; that stretch reads NDLVSYEKE.

It belongs to the terpene synthase family.

It catalyses the reaction (2E,6E)-farnesyl diphosphate = (2S,3R,6S,9S)-(-)-protoillud-7-ene + diphosphate. Terpene synthase that converts its substrate farnesyl diphosphate (FPP) into the sesquiterpene (2S,3R,6S,9S)-(-)-protoillud-7-ene. This is Terpene synthase 6 from Dictyostelium discoideum (Social amoeba).